We begin with the raw amino-acid sequence, 115 residues long: NADH-ubiquinone oxidoreductase chain 3 (115 aa).

3 consecutive transmembrane segments (helical) span residues 3-23, 55-75, and 84-104; these read LLMA…IAFW, FFLV…LLPL, and LSAM…GLMY.

Belongs to the complex I subunit 3 family. In terms of assembly, core subunit of respiratory chain NADH dehydrogenase (Complex I) which is composed of 45 different subunits. Interacts with TMEM186. Interacts with TMEM242.

The protein localises to the mitochondrion inner membrane. The enzyme catalyses a ubiquinone + NADH + 5 H(+)(in) = a ubiquinol + NAD(+) + 4 H(+)(out). Core subunit of the mitochondrial membrane respiratory chain NADH dehydrogenase (Complex I) which catalyzes electron transfer from NADH through the respiratory chain, using ubiquinone as an electron acceptor. Essential for the catalytic activity of complex I. The protein is NADH-ubiquinone oxidoreductase chain 3 of Sigmodon ochrognathus (Yellow-nosed cotton rat).